Reading from the N-terminus, the 183-residue chain is Small ribosomal subunit protein cS23y (183 aa).

The protein belongs to the chloroplast-specific ribosomal protein cS23 family. As to quaternary structure, part of the 30S ribosomal subunit.

The protein localises to the plastid. It localises to the chloroplast. Component of the chloroplast ribosome (chloro-ribosome), a dedicated translation machinery responsible for the synthesis of chloroplast genome-encoded proteins, including proteins of the transcription and translation machinery and components of the photosynthetic apparatus. The chain is Small ribosomal subunit protein cS23y from Arabidopsis thaliana (Mouse-ear cress).